The primary structure comprises 637 residues: tRNA uridine 5-carboxymethylaminomethyl modification enzyme MnmG (637 aa).

18 to 23 (GAGHAG) provides a ligand contact to FAD. 282–296 (GPRYCPSIEDKIVRF) serves as a coordination point for NAD(+).

The protein belongs to the MnmG family. As to quaternary structure, homodimer. Heterotetramer of two MnmE and two MnmG subunits. FAD serves as cofactor.

It is found in the cytoplasm. Its function is as follows. NAD-binding protein involved in the addition of a carboxymethylaminomethyl (cmnm) group at the wobble position (U34) of certain tRNAs, forming tRNA-cmnm(5)s(2)U34. The protein is tRNA uridine 5-carboxymethylaminomethyl modification enzyme MnmG of Pediococcus pentosaceus (strain ATCC 25745 / CCUG 21536 / LMG 10740 / 183-1w).